The primary structure comprises 380 residues: Homoserine O-acetyltransferase (380 aa).

Residues 59-363 form the AB hydrolase-1 domain; it reads NVVMVLHALT…IYGHDGFLVE (305 aa). The Nucleophile role is filled by Ser164. Substrate is bound at residue Arg234. Active-site residues include Asp327 and His357. Substrate is bound at residue Asp358.

It belongs to the AB hydrolase superfamily. MetX family. Homodimer.

The protein localises to the cytoplasm. It catalyses the reaction L-homoserine + acetyl-CoA = O-acetyl-L-homoserine + CoA. The protein operates within amino-acid biosynthesis; L-methionine biosynthesis via de novo pathway; O-acetyl-L-homoserine from L-homoserine: step 1/1. Its function is as follows. Transfers an acetyl group from acetyl-CoA to L-homoserine, forming acetyl-L-homoserine. The chain is Homoserine O-acetyltransferase from Mycolicibacterium smegmatis (strain ATCC 700084 / mc(2)155) (Mycobacterium smegmatis).